A 193-amino-acid polypeptide reads, in one-letter code: MLGLSATGVLVGGLWAWIAPPIHAVVAITRAGERVHEYLGSESQNFFIAPFMLLGLLSVLAVVASALMWQWREHRGPQMVAGLSIGLTTAAAIAAGVGALVVRLRYGALDFDTVPLSRGDHALTYVTQAPPVFFARRPLQIALTLMWPAGIASLVYALLAAGTARDDLGGYPAVDPSSNARTEALETPQAPVS.

4 helical membrane passes run glycine 8–isoleucine 28, phenylalanine 46–alanine 66, glycine 82–valine 102, and isoleucine 141–alanine 161.

It to M.leprae ML1222.

It localises to the cell membrane. This is an uncharacterized protein from Mycobacterium tuberculosis (strain CDC 1551 / Oshkosh).